A 324-amino-acid polypeptide reads, in one-letter code: Germination protease (324 aa).

Positions 1–10 (MIIVLGIRTD) are excised as a propeptide.

The protein belongs to the peptidase A25 family. In terms of assembly, homotetramer. In terms of processing, autoproteolytically processed. The inactive tetrameric zymogen termed p46 autoprocesses to a smaller form termed p41, which is active only during spore germination.

The catalysed reaction is Endopeptidase action with P4 Glu or Asp, P1 preferably Glu &gt; Asp, P1' hydrophobic and P2' Ala.. Functionally, initiates the rapid degradation of small, acid-soluble proteins during spore germination. The polypeptide is Germination protease (Caldanaerobacter subterraneus subsp. tengcongensis (strain DSM 15242 / JCM 11007 / NBRC 100824 / MB4) (Thermoanaerobacter tengcongensis)).